A 232-amino-acid chain; its full sequence is Chalcone--flavanone isomerase (232 aa).

The substrate site is built by Thr50 and Ser192.

The protein belongs to the chalcone isomerase family.

The enzyme catalyses a chalcone = a flavanone.. Its pathway is secondary metabolite biosynthesis; flavonoid biosynthesis. Catalyzes the intramolecular cyclization of bicyclic chalcones into tricyclic (S)-flavanones. Responsible for the isomerization of 4,2',4',6'-tetrahydroxychalcone (also termed chalcone) into naringenin. This chain is Chalcone--flavanone isomerase (CHI), found in Saussurea medusa (Saw-wort).